The chain runs to 204 residues: MQVILLERVAKLGQMGDVVDVKPGFARNYLLPQGKAQTASDANIAAFEAQKAQLEARNLETKKEAEALGEKLGGQQFVVIRSASDGGNLYGSVTTRDAADVATEEGFSVDRKQVIIREPIKTLGLHIAEVHLHPEVMVTIELNVARSPEEAELQASGKSIQELAAEEEAAAEFEISELFDDIGGAASDDEGDAPAAAADEEESK.

Positions 180 to 204 (DDIGGAASDDEGDAPAAAADEEESK) are disordered. Residues 187–204 (SDDEGDAPAAAADEEESK) show a composition bias toward acidic residues.

This sequence belongs to the bacterial ribosomal protein bL9 family.

Binds to the 23S rRNA. In Ruegeria sp. (strain TM1040) (Silicibacter sp.), this protein is Large ribosomal subunit protein bL9.